The sequence spans 2609 residues: Beige protein homolog 1 (2609 aa).

Disordered regions lie at residues 1654–1679 and 1691–1729; these read DSKL…APVS and ILPS…KNRT. Acidic residues predominate over residues 1711–1723; it reads MEDEEDDVDEEDK. One can recognise a BEACH-type PH domain in the interval 1735-1870; sequence ESGDSIQDVY…NRDSLYQKLV (136 aa). Residues 1907–2202 form the BEACH domain; the sequence is ANALSFSTTH…QVFKKPHPQR (296 aa). 5 WD repeats span residues 2249 to 2290, 2294 to 2332, 2340 to 2379, 2429 to 2475, and 2507 to 2546; these read KDEV…QPVM, LHSE…PIKA, GHRY…FVSS, NSDE…NAKL, and ATRQ…SNVH. The FYVE-type zinc finger occupies 2550–2604; it reads DNTSELCSLCDSRFSLMEWRSQCRACGNSNVCSDCVSMLKDTNIKTCYECYRQMP.

It localises to the cytoplasm. The protein resides in the membrane. Functionally, may be involved in protein sorting and cell wall formation. The sequence is that of Beige protein homolog 1 (lvs1) from Schizosaccharomyces pombe (strain 972 / ATCC 24843) (Fission yeast).